We begin with the raw amino-acid sequence, 932 residues long: RNA-binding protein 12 (932 aa).

Positions 97-116 (IPPANASRSGPPPSSGMSGR) are disordered. Residues 98-116 (PPANASRSGPPPSSGMSGR) are compositionally biased toward low complexity. Residues 304–379 (LYVSVHGMPF…RYVEVSPATE (76 aa)) form the RRM 1 domain. Phosphoserine occurs at positions 352 and 375. Composition is skewed to polar residues over residues 392–401 (KQNMGPSGQT) and 408–417 (LPRSKSPSGQ). A disordered region spans residues 392–424 (KQNMGPSGQTHPPPQTLPRSKSPSGQKRSRSRS). A phosphoserine mark is found at serine 420, serine 422, and serine 424. The region spanning 430–507 (FCVYLKGLPF…RFIQVHPITK (78 aa)) is the RRM 2 domain. Serine 525 carries the phosphoserine modification. Residues 717–734 (NGPPFNFPGNFGGSNAFG) show a composition bias toward low complexity. Residues 717–855 (NGPPFNFPGN…PGFASSSGKP (139 aa)) are disordered. Over residues 783-811 (SGFGGGPQNFGNGPGSLGGPPGFGSGPPG) the composition is skewed to gly residues. Residues 824 to 838 (AFGPGPGPGPGPGPG) are compositionally biased toward pro residues. The RRM 3 domain maps to 856 to 932 (GPTVIKVQNM…PIGSRKVNLY (77 aa)).

The protein localises to the nucleus. The protein is RNA-binding protein 12 (RBM12) of Pongo abelii (Sumatran orangutan).